Consider the following 79-residue polypeptide: uncharacterized protein (79 aa).

The first 33 residues, 1–33 (MRLSIRAIVLFALVWIGLLMSGYGVLVGSKVNA), serve as a signal peptide directing secretion.

This is an uncharacterized protein from Salmonella paratyphi A (strain ATCC 9150 / SARB42).